We begin with the raw amino-acid sequence, 612 residues long: Arginine--tRNA ligase (612 aa).

The short motif at 152–162 is the 'HIGH' region element; sequence PNIAKEMHVGH.

It belongs to the class-I aminoacyl-tRNA synthetase family. As to quaternary structure, monomer.

The protein localises to the cytoplasm. It catalyses the reaction tRNA(Arg) + L-arginine + ATP = L-arginyl-tRNA(Arg) + AMP + diphosphate. The sequence is that of Arginine--tRNA ligase from Prochlorococcus marinus (strain MIT 9313).